Consider the following 247-residue polypeptide: 2,3-bisphosphoglycerate-dependent phosphoglycerate mutase (247 aa).

Substrate is bound by residues 8–15 (RHGESQWN), 21–22 (TG), Arg-60, 87–90 (ERHY), Lys-98, 114–115 (RR), and 183–184 (GN). The active-site Tele-phosphohistidine intermediate is the His-9. Glu-87 serves as the catalytic Proton donor/acceptor.

Belongs to the phosphoglycerate mutase family. BPG-dependent PGAM subfamily.

The enzyme catalyses (2R)-2-phosphoglycerate = (2R)-3-phosphoglycerate. Its pathway is carbohydrate degradation; glycolysis; pyruvate from D-glyceraldehyde 3-phosphate: step 3/5. Catalyzes the interconversion of 2-phosphoglycerate and 3-phosphoglycerate. The protein is 2,3-bisphosphoglycerate-dependent phosphoglycerate mutase of Chlorobium phaeobacteroides (strain DSM 266 / SMG 266 / 2430).